A 322-amino-acid chain; its full sequence is UDP-N-acetylenolpyruvoylglucosamine reductase (322 aa).

The region spanning 36–202 (RAGGPAQVLF…TSVLFEGVPG (167 aa)) is the FAD-binding PCMH-type domain. The active site involves Arg182. Ser231 serves as the catalytic Proton donor. Glu301 is an active-site residue.

Belongs to the MurB family. It depends on FAD as a cofactor.

It localises to the cytoplasm. It catalyses the reaction UDP-N-acetyl-alpha-D-muramate + NADP(+) = UDP-N-acetyl-3-O-(1-carboxyvinyl)-alpha-D-glucosamine + NADPH + H(+). Its pathway is cell wall biogenesis; peptidoglycan biosynthesis. Cell wall formation. The polypeptide is UDP-N-acetylenolpyruvoylglucosamine reductase (Brucella canis (strain ATCC 23365 / NCTC 10854 / RM-666)).